A 174-amino-acid polypeptide reads, in one-letter code: MHTTRCILALLLCLTQAMSGCYCQGTLIEEIENLKKYFNSSSLDVVNGGDLVFNILTNWQKAGDTKIIESQIVSFYFKLFEALKDNQAIQRSIDTIKADLFANFFNSSMEKLNDFVKLTKIPVNDLQVQRKAVNELISVMPHLSRKLSLRKRKRSRCCFGGGNRPNKNILASNI.

The N-terminal stretch at 1–23 (MHTTRCILALLLCLTQAMSGCYC) is a signal peptide. Position 24 is a pyrrolidone carboxylic acid (glutamine 24). N-linked (GlcNAc...) asparagine glycosylation is found at asparagine 39 and asparagine 106.

It belongs to the type II (or gamma) interferon family. In terms of assembly, homodimer. Interacts with IFNGR1 (via extracellular domain); this interaction promotes IFNGR1 dimerization. As to expression, released primarily from activated T lymphocytes.

Its subcellular location is the secreted. In terms of biological role, type II interferon produced by immune cells such as T-cells and NK cells that plays crucial roles in antimicrobial, antiviral, and antitumor responses by activating effector immune cells and enhancing antigen presentation. Primarily signals through the JAK-STAT pathway after interaction with its receptor IFNGR1 to affect gene regulation. Upon IFNG binding, IFNGR1 intracellular domain opens out to allow association of downstream signaling components JAK2, JAK1 and STAT1, leading to STAT1 activation, nuclear translocation and transcription of IFNG-regulated genes. Many of the induced genes are transcription factors such as IRF1 that are able to further drive regulation of a next wave of transcription. Plays a role in class I antigen presentation pathway by inducing a replacement of catalytic proteasome subunits with immunoproteasome subunits. In turn, increases the quantity, quality, and repertoire of peptides for class I MHC loading. Increases the efficiency of peptide generation also by inducing the expression of activator PA28 that associates with the proteasome and alters its proteolytic cleavage preference. Up-regulates as well MHC II complexes on the cell surface by promoting expression of several key molecules such as cathepsins B/CTSB, H/CTSH, and L/CTSL. Participates in the regulation of hematopoietic stem cells during development and under homeostatic conditions by affecting their development, quiescence, and differentiation. The protein is Interferon gamma (IFNG) of Mesocricetus auratus (Golden hamster).